The following is a 332-amino-acid chain: Transcription regulatory protein SNF6 (332 aa).

Positions 2–8 match the Nuclear localization signal motif; that stretch reads GVIKKKR. Thr-165 is modified (phosphothreonine). The disordered stretch occupies residues 278–299; that stretch reads VTTVASQSPHATATEKEPVPAV.

Component of the SWI/SNF global transcription activator complex. The 1.14 MDa SWI/SNF complex is composed of 11 different subunits: one copy each of SWI1, SNF2/SWI2, SNF5, SNF12/SWP73, ARP7/SWP61, ARP9/SWP59; two copies each of SWI3, SNF6, SNF11, SWP82; and three copies of TAF14/SWP29.

It is found in the nucleus. In terms of biological role, involved in transcriptional activation. Component of the SWI/SNF complex, an ATP-dependent chromatin remodeling complex, which is required for the positive and negative regulation of gene expression of a large number of genes. It changes chromatin structure by altering DNA-histone contacts within a nucleosome, leading eventually to a change in nucleosome position, thus facilitating or repressing binding of gene-specific transcription factors. The polypeptide is Transcription regulatory protein SNF6 (SNF6) (Saccharomyces cerevisiae (strain ATCC 204508 / S288c) (Baker's yeast)).